Here is an 807-residue protein sequence, read N- to C-terminus: Glycerol-3-phosphate acyltransferase (807 aa).

An HXXXXD motif motif is present at residues 306–311; it reads HRSHMD.

This sequence belongs to the GPAT/DAPAT family.

The protein localises to the cell inner membrane. The catalysed reaction is sn-glycerol 3-phosphate + an acyl-CoA = a 1-acyl-sn-glycero-3-phosphate + CoA. It functions in the pathway phospholipid metabolism; CDP-diacylglycerol biosynthesis; CDP-diacylglycerol from sn-glycerol 3-phosphate: step 1/3. The protein is Glycerol-3-phosphate acyltransferase (plsB) of Escherichia coli O157:H7.